The sequence spans 78 residues: DNA-directed RNA polymerase subunit omega (78 aa).

This sequence belongs to the RNA polymerase subunit omega family. In cyanobacteria the RNAP catalytic core is composed of 2 alpha, 1 beta, 1 beta', 1 gamma and 1 omega subunit. When a sigma factor is associated with the core the holoenzyme is formed, which can initiate transcription.

It carries out the reaction RNA(n) + a ribonucleoside 5'-triphosphate = RNA(n+1) + diphosphate. Its function is as follows. Promotes RNA polymerase assembly. Latches the N- and C-terminal regions of the beta' subunit thereby facilitating its interaction with the beta and alpha subunits. In Nostoc punctiforme (strain ATCC 29133 / PCC 73102), this protein is DNA-directed RNA polymerase subunit omega.